The primary structure comprises 476 residues: CBL-interacting protein kinase 30 (476 aa).

A Protein kinase domain is found at 17-272 (YKLGRLLGRG…ISKIMDRPWF (256 aa)). ATP is bound by residues 23-31 (LGRGTFAKV) and K46. D140 functions as the Proton acceptor in the catalytic mechanism. Residues 158–187 (DFGLSALDGGLRGDGLLHTTCGTPAYVAPE) form an activation loop region. Residues 296 to 315 (KEASQQHDDEEDDGFAREKK) form a disordered region. The region spanning 299–353 (SQQHDDEEDDGFAREKKKRSNVIMSSPVIDVRPSSMNAFDIISRSRGLDLSKMFD) is the NAF domain. A PPI region spans residues 358–387 (RSEARFSTRETTTAIVSKLEEIAEAGRFSF).

The protein belongs to the protein kinase superfamily. CAMK Ser/Thr protein kinase family. SNF1 subfamily. Requires Mn(2+) as cofactor.

The catalysed reaction is L-seryl-[protein] + ATP = O-phospho-L-seryl-[protein] + ADP + H(+). It catalyses the reaction L-threonyl-[protein] + ATP = O-phospho-L-threonyl-[protein] + ADP + H(+). Functionally, CIPK serine-threonine protein kinases interact with CBL proteins. Binding of a CBL protein to the regulatory NAF domain of CIPK protein lead to the activation of the kinase in a calcium-dependent manner. This chain is CBL-interacting protein kinase 30 (CIPK30), found in Oryza sativa subsp. japonica (Rice).